Consider the following 861-residue polypeptide: 1,4-alpha-glucan-branching enzyme (861 aa).

(1,4-alpha-D-glucosyl)n contacts are provided by Trp173 and Lys208. The Nucleophile role is filled by Asp429. The Proton donor role is filled by Glu484.

The protein belongs to the glycosyl hydrolase 13 family. GlgB subfamily. As to quaternary structure, monomer.

It localises to the plastid. The protein localises to the chloroplast. Its subcellular location is the amyloplast. It carries out the reaction Transfers a segment of a (1-&gt;4)-alpha-D-glucan chain to a primary hydroxy group in a similar glucan chain.. The protein operates within glycan biosynthesis; starch biosynthesis. Functionally, catalyzes the formation of the alpha-1,6-glucosidic linkages in starch by scission of a 1,4-alpha-linked oligosaccharide from growing alpha-1,4-glucan chains and the subsequent attachment of the oligosaccharide to the alpha-1,6 position. This is 1,4-alpha-glucan-branching enzyme (SBE1) from Solanum tuberosum (Potato).